A 141-amino-acid chain; its full sequence is Lysozyme P (141 aa).

Residues 1-18 form the signal peptide; it reads MKAFLVICALTLTAVATQ. A C-type lysozyme domain is found at 20 to 141; it reads RTMDRCSLAR…GSLPSINSCF (122 aa). Intrachain disulfides connect C25–C140, C46–C130, C81–C97, and C93–C111. Active-site residues include E51 and D69.

It belongs to the glycosyl hydrolase 22 family. As to expression, salivary gland.

It catalyses the reaction Hydrolysis of (1-&gt;4)-beta-linkages between N-acetylmuramic acid and N-acetyl-D-glucosamine residues in a peptidoglycan and between N-acetyl-D-glucosamine residues in chitodextrins.. Functionally, unlikely to play an active role in the humoral immune defense. May have a function in the digestion of bacteria in the food. In Drosophila melanogaster (Fruit fly), this protein is Lysozyme P (LysP).